The following is a 907-amino-acid chain: Valine--tRNA ligase (907 aa).

Residues 45-55 (PNVTGSLHMGH) carry the 'HIGH' region motif. Positions 554–558 (KMSKS) match the 'KMSKS' region motif. K557 lines the ATP pocket. Residues 838 to 870 (GQLIDLEAERARLMKDVSKIEQDIEKLSAKLSN) are a coiled coil.

It belongs to the class-I aminoacyl-tRNA synthetase family. ValS type 1 subfamily. In terms of assembly, monomer.

It is found in the cytoplasm. The enzyme catalyses tRNA(Val) + L-valine + ATP = L-valyl-tRNA(Val) + AMP + diphosphate. Catalyzes the attachment of valine to tRNA(Val). As ValRS can inadvertently accommodate and process structurally similar amino acids such as threonine, to avoid such errors, it has a 'posttransfer' editing activity that hydrolyzes mischarged Thr-tRNA(Val) in a tRNA-dependent manner. This is Valine--tRNA ligase from Bartonella henselae (strain ATCC 49882 / DSM 28221 / CCUG 30454 / Houston 1) (Rochalimaea henselae).